The chain runs to 328 residues: Tetraacyldisaccharide 4'-kinase (328 aa).

55-62 is a binding site for ATP; it reads TAGGNGKT.

Belongs to the LpxK family.

The enzyme catalyses a lipid A disaccharide + ATP = a lipid IVA + ADP + H(+). It participates in glycolipid biosynthesis; lipid IV(A) biosynthesis; lipid IV(A) from (3R)-3-hydroxytetradecanoyl-[acyl-carrier-protein] and UDP-N-acetyl-alpha-D-glucosamine: step 6/6. Transfers the gamma-phosphate of ATP to the 4'-position of a tetraacyldisaccharide 1-phosphate intermediate (termed DS-1-P) to form tetraacyldisaccharide 1,4'-bis-phosphate (lipid IVA). This Escherichia coli (strain SMS-3-5 / SECEC) protein is Tetraacyldisaccharide 4'-kinase.